A 469-amino-acid polypeptide reads, in one-letter code: MATPWGAVFFLLMIACAGSTVFYREQQTWFEGVFLSSMCPANVSASTFYGIMFDAGSTGTRIHVYTFVQKAAGQLPFLEGEIFDSVKPGLSAFADQPKQGAQTVHALLEVAKDSIPRSHWKRTPVVLKATAGLRLLPEQKAQALLLEVEEIFKMSPFLVPDDSVSIMDGSYEGILAWVTVNFLTGQLHGHSQETMGTLDLGGASTQITFLPQFSKTLEQTPRDYLTSFEMFNSTFKLYTHSYLGFGLKAARLATLGALETEGTDGHTFRSACLPRWLEAEWIFGGVKYQYGGNQEGEMGFEPCYAEVLRVVQGKLHQPEEIRGSSFYAFSYYYDRAADTHLIDYEKGGVLKVEDFERKAREVCDNLESFTSGSPFLCMDLSYITALLKDGFGFADGTLLQLTKKVNNIETGWPGGHLSPAAVSGHLQLRLSVPLETCTSELLFTGRRGLGHFLQLRWRKPGLKPIDWLY.

Residues 1-24 form the signal peptide; the sequence is MATPWGAVFFLLMIACAGSTVFYR. Glutamate 172 acts as the Proton acceptor in catalysis. N-linked (GlcNAc...) asparagine glycosylation is present at asparagine 232. 2 cysteine pairs are disulfide-bonded: cysteine 272-cysteine 303 and cysteine 363-cysteine 377.

It belongs to the GDA1/CD39 NTPase family. In terms of assembly, monomer; active form. Homodimer; disulfide-linked. Homodimers are enzymatically inactive. Ca(2+) is required as a cofactor. It depends on Mg(2+) as a cofactor. Post-translationally, N-glycosylated; high-mannose type. In terms of tissue distribution, expressed in fetal cells and most adult tissues.

The protein localises to the endoplasmic reticulum. It is found in the secreted. It catalyses the reaction a ribonucleoside 5'-diphosphate + H2O = a ribonucleoside 5'-phosphate + phosphate + H(+). The catalysed reaction is GDP + H2O = GMP + phosphate + H(+). It carries out the reaction UDP + H2O = UMP + phosphate + H(+). The enzyme catalyses IDP + H2O = IMP + phosphate + H(+). It catalyses the reaction CDP + H2O = CMP + phosphate + H(+). The catalysed reaction is ADP + H2O = AMP + phosphate + H(+). The protein operates within protein modification; protein glycosylation. Functionally, hydrolyzes nucleoside diphosphates with a preference for GDP, IDP and UDP compared to ADP and CDP. In the lumen of the endoplasmic reticulum, hydrolyzes UDP that acts as an end-product feedback inhibitor of the UDP-Glc:glycoprotein glucosyltransferases. UMP can be transported back by an UDP-sugar antiporter to the cytosol where it is consumed to regenerate UDP-glucose. Therefore, it positively regulates protein reglucosylation by clearing UDP from the ER lumen and by promoting the regeneration of UDP-glucose. Protein reglucosylation is essential to proper glycoprotein folding and quality control in the ER. This Mesocricetus auratus (Golden hamster) protein is Ectonucleoside triphosphate diphosphohydrolase 5 (ENTPD5).